The following is a 148-amino-acid chain: uncharacterized protein (148 aa).

The 62-residue stretch at 4 to 65 (LDRVDMQLVK…IPDIDKLGYM (62 aa)) folds into the HTH asnC-type domain. Positions 23 to 42 (YRELADILNTTRQRIARRID) form a DNA-binding region, H-T-H motif.

This is an uncharacterized protein from Pyrococcus horikoshii (strain ATCC 700860 / DSM 12428 / JCM 9974 / NBRC 100139 / OT-3).